Consider the following 342-residue polypeptide: ATP-dependent (S)-NAD(P)H-hydrate dehydratase (342 aa).

The YjeF C-terminal domain occupies 11–337 (ILPALEKVVP…EYLGHRLFTF (327 aa)). Residues Gly-127 and 180-186 (NVMEHKR) contribute to the (6S)-NADPHX site. Residues 229-233 (KGKTD) and 248-257 (GSPRRCGGQG) contribute to the ATP site. Residue Asp-258 participates in (6S)-NADPHX binding.

The protein belongs to the NnrD/CARKD family. Mg(2+) is required as a cofactor.

It carries out the reaction (6S)-NADHX + ATP = ADP + phosphate + NADH + H(+). It catalyses the reaction (6S)-NADPHX + ATP = ADP + phosphate + NADPH + H(+). Functionally, catalyzes the dehydration of the S-form of NAD(P)HX at the expense of ATP, which is converted to ADP. Together with NAD(P)HX epimerase, which catalyzes the epimerization of the S- and R-forms, the enzyme allows the repair of both epimers of NAD(P)HX, a damaged form of NAD(P)H that is a result of enzymatic or heat-dependent hydration. The sequence is that of ATP-dependent (S)-NAD(P)H-hydrate dehydratase from Physcomitrium patens (Spreading-leaved earth moss).